Here is a 557-residue protein sequence, read N- to C-terminus: Membrane protein insertase YidC (557 aa).

A helical membrane pass occupies residues 7–27 (ILLVALAVVSYLLVLQWNQDY). The disordered stretch occupies residues 42-77 (ASPALPETVPGDSSTSADVPTAGSGNQVPDSAASTA). Polar residues predominate over residues 52–77 (GDSSTSADVPTAGSGNQVPDSAASTA). Helical transmembrane passes span 370–390 (WGWS…PLSA), 436–456 (LGGC…YWVL), and 514–534 (PIIF…YWVV).

The protein belongs to the OXA1/ALB3/YidC family. Type 1 subfamily. In terms of assembly, interacts with the Sec translocase complex via SecD. Specifically interacts with transmembrane segments of nascent integral membrane proteins during membrane integration.

Its subcellular location is the cell inner membrane. In terms of biological role, required for the insertion and/or proper folding and/or complex formation of integral membrane proteins into the membrane. Involved in integration of membrane proteins that insert both dependently and independently of the Sec translocase complex, as well as at least some lipoproteins. Aids folding of multispanning membrane proteins. The sequence is that of Membrane protein insertase YidC from Azotobacter vinelandii (strain DJ / ATCC BAA-1303).